A 474-amino-acid polypeptide reads, in one-letter code: Aspartyl/glutamyl-tRNA(Asn/Gln) amidotransferase subunit B (474 aa).

This sequence belongs to the GatB/GatE family. GatB subfamily. In terms of assembly, heterotrimer of A, B and C subunits.

The enzyme catalyses L-glutamyl-tRNA(Gln) + L-glutamine + ATP + H2O = L-glutaminyl-tRNA(Gln) + L-glutamate + ADP + phosphate + H(+). It catalyses the reaction L-aspartyl-tRNA(Asn) + L-glutamine + ATP + H2O = L-asparaginyl-tRNA(Asn) + L-glutamate + ADP + phosphate + 2 H(+). Allows the formation of correctly charged Asn-tRNA(Asn) or Gln-tRNA(Gln) through the transamidation of misacylated Asp-tRNA(Asn) or Glu-tRNA(Gln) in organisms which lack either or both of asparaginyl-tRNA or glutaminyl-tRNA synthetases. The reaction takes place in the presence of glutamine and ATP through an activated phospho-Asp-tRNA(Asn) or phospho-Glu-tRNA(Gln). The protein is Aspartyl/glutamyl-tRNA(Asn/Gln) amidotransferase subunit B of Coprothermobacter proteolyticus (strain ATCC 35245 / DSM 5265 / OCM 4 / BT).